We begin with the raw amino-acid sequence, 246 residues long: MTDTPADDLKPSFRSDVTVELVKHSAADSDVLWAARVSTAGEQSLDELKKDPERSKGLINYLMRDRHGSPFEHNSMTFFISAPIFVFREFMRHRVGWSYNEESGRYRELEPVFYVPGESRKLVQEGRPGKYVFVEGTQAQQELTGRVMEDSYRQAYEAYQEMLAAGVAREVARAVLPVGLFSSMYATCNARSLMHFLGLRTQHELAKVPSFPQREIEMVGEKMEAEWAKLMPLTYAAFNTNGRVAP.

Residues 17–241 (VTVELVKHSA…PLTYAAFNTN (225 aa)) enclose the ThyX domain. Residues Ser-69, 92–94 (RHR), and Glu-101 each bind FAD. Residues 89 to 92 (EFMR), 101 to 105 (EESGR), and Arg-173 contribute to the dUMP site. A ThyX motif motif is present at residues 92–103 (RHRVGWSYNEES). FAD contacts are provided by residues 189–191 (NAR) and His-195. Arg-200 provides a ligand contact to dUMP. The Involved in ionization of N3 of dUMP, leading to its activation role is filled by Arg-200.

It belongs to the thymidylate synthase ThyX family. In terms of assembly, homotetramer. The cofactor is FAD.

The catalysed reaction is dUMP + (6R)-5,10-methylene-5,6,7,8-tetrahydrofolate + NADPH + H(+) = dTMP + (6S)-5,6,7,8-tetrahydrofolate + NADP(+). It functions in the pathway pyrimidine metabolism; dTTP biosynthesis. Functionally, catalyzes the reductive methylation of 2'-deoxyuridine-5'-monophosphate (dUMP) to 2'-deoxythymidine-5'-monophosphate (dTMP) while utilizing 5,10-methylenetetrahydrofolate (mTHF) as the methyl donor, and NADPH and FADH(2) as the reductant. The protein is Flavin-dependent thymidylate synthase of Streptomyces avermitilis (strain ATCC 31267 / DSM 46492 / JCM 5070 / NBRC 14893 / NCIMB 12804 / NRRL 8165 / MA-4680).